A 336-amino-acid chain; its full sequence is Melanoma-associated antigen B17 (336 aa).

Residues 1 to 17 (MPRGQASKRRAREKRRQ) are compositionally biased toward basic residues. The tract at residues 1-108 (MPRGQASKRR…SSSESTGRDL (108 aa)) is disordered. 2 stretches are compositionally biased toward low complexity: residues 39 to 54 (PSSS…QSFP) and 62 to 80 (SQRA…LTSS). Residues 90-103 (ESPNSFHGPSSSES) show a composition bias toward polar residues. The region spanning 109 to 336 (LNTKTGELVQ…RARASRSFQP (228 aa)) is the MAGE domain.

The sequence is that of Melanoma-associated antigen B17 (MAGEB17) from Homo sapiens (Human).